A 204-amino-acid polypeptide reads, in one-letter code: Urease accessory protein UreG (204 aa).

12-19 serves as a coordination point for GTP; sequence GPVGSGKT.

The protein belongs to the SIMIBI class G3E GTPase family. UreG subfamily. In terms of assembly, homodimer. UreD, UreF and UreG form a complex that acts as a GTP-hydrolysis-dependent molecular chaperone, activating the urease apoprotein by helping to assemble the nickel containing metallocenter of UreC. The UreE protein probably delivers the nickel.

It localises to the cytoplasm. Functionally, facilitates the functional incorporation of the urease nickel metallocenter. This process requires GTP hydrolysis, probably effectuated by UreG. The sequence is that of Urease accessory protein UreG from Hahella chejuensis (strain KCTC 2396).